The chain runs to 215 residues: UPF0502 protein YceH (215 aa).

Residue lysine 80 is modified to N6-acetyllysine.

The protein belongs to the UPF0502 family.

In Escherichia coli O7:K1 (strain IAI39 / ExPEC), this protein is UPF0502 protein YceH.